The chain runs to 279 residues: uncharacterized protein (279 aa).

This is an uncharacterized protein from Borreliella burgdorferi (strain ATCC 35210 / DSM 4680 / CIP 102532 / B31) (Borrelia burgdorferi).